A 701-amino-acid polypeptide reads, in one-letter code: Kinesin-like protein KIN-10C (701 aa).

The 311-residue stretch at 8–318 (VVRVVARVKP…LNLASRICLG (311 aa)) folds into the Kinesin motor domain. 94 to 101 (GARNSGKT) contributes to the ATP binding site.

This sequence belongs to the TRAFAC class myosin-kinesin ATPase superfamily. Kinesin family. KIN-10 subfamily.

The sequence is that of Kinesin-like protein KIN-10C from Arabidopsis thaliana (Mouse-ear cress).